The sequence spans 461 residues: Argininosuccinate lyase (461 aa).

3 residues coordinate 2-(N(omega)-L-arginino)succinate: Ser28, Asn115, and Thr160. Catalysis depends on His161, which acts as the Proton acceptor. Residue Ser282 is the Proton donor of the active site. 2-(N(omega)-L-arginino)succinate contacts are provided by Asn290, Tyr322, Gln327, and Lys330.

It belongs to the lyase 1 family. Argininosuccinate lyase subfamily. As to quaternary structure, homotetramer.

The catalysed reaction is 2-(N(omega)-L-arginino)succinate = fumarate + L-arginine. It participates in amino-acid biosynthesis; L-arginine biosynthesis; L-arginine from L-ornithine and carbamoyl phosphate: step 3/3. This is Argininosuccinate lyase (arg7) from Schizosaccharomyces pombe (strain 972 / ATCC 24843) (Fission yeast).